A 66-amino-acid chain; its full sequence is Small ribosomal subunit protein bS21 (66 aa).

The segment at 47 to 66 is disordered; the sequence is KAQEAARRKRKFARKRMYED. Over residues 53-66 the composition is skewed to basic residues; that stretch reads RRKRKFARKRMYED.

This sequence belongs to the bacterial ribosomal protein bS21 family.

This chain is Small ribosomal subunit protein bS21, found in Rickettsia bellii (strain RML369-C).